We begin with the raw amino-acid sequence, 517 residues long: Ribonuclease Y (517 aa).

Residues 1–21 (MIEFLIGLIAAVVGILVGYLI) form a helical membrane-spanning segment. The KH domain maps to 207–271 (LINVVNIKND…IAVRTVELLV (65 aa)). The region spanning 333–426 (ALIHSLEVAH…VCTADVLSAA (94 aa)) is the HD domain.

It belongs to the RNase Y family.

Its subcellular location is the cell membrane. Functionally, endoribonuclease that initiates mRNA decay. The protein is Ribonuclease Y of Campylobacter hominis (strain ATCC BAA-381 / DSM 21671 / CCUG 45161 / LMG 19568 / NCTC 13146 / CH001A).